The sequence spans 427 residues: Trigger factor (427 aa).

The PPIase FKBP-type domain maps to 163-248 (GNIAIIDFKG…VKGIKAKELP (86 aa)).

The protein belongs to the FKBP-type PPIase family. Tig subfamily.

Its subcellular location is the cytoplasm. The enzyme catalyses [protein]-peptidylproline (omega=180) = [protein]-peptidylproline (omega=0). Involved in protein export. Acts as a chaperone by maintaining the newly synthesized protein in an open conformation. Functions as a peptidyl-prolyl cis-trans isomerase. The polypeptide is Trigger factor (Clostridium botulinum (strain Eklund 17B / Type B)).